We begin with the raw amino-acid sequence, 112 residues long: T cell receptor alpha variable 41 (112 aa).

The N-terminal stretch at 1 to 21 is a signal peptide; that stretch reads MVKIRQFLLAILWLQLSCVSA. An Ig-like domain is found at 24-112; the sequence is NEVEQSPQNL…DSAVYICAVR (89 aa). N-linked (GlcNAc...) asparagine glycans are attached at residues N32 and N44. C45 and C109 are oxidised to a cystine.

As to quaternary structure, alpha-beta TR is a heterodimer composed of an alpha and beta chain; disulfide-linked. The alpha-beta TR is associated with the transmembrane signaling CD3 coreceptor proteins to form the TR-CD3 (TcR or TCR). The assembly of alpha-beta TR heterodimers with CD3 occurs in the endoplasmic reticulum where a single alpha-beta TR heterodimer associates with one CD3D-CD3E heterodimer, one CD3G-CD3E heterodimer and one CD247 homodimer forming a stable octameric structure. CD3D-CD3E and CD3G-CD3E heterodimers preferentially associate with TR alpha and TR beta chains, respectively. The association of the CD247 homodimer is the last step of TcR assembly in the endoplasmic reticulum and is required for transport to the cell surface.

The protein resides in the cell membrane. Its function is as follows. V region of the variable domain of T cell receptor (TR) alpha chain that participates in the antigen recognition. Alpha-beta T cell receptors are antigen specific receptors which are essential to the immune response and are present on the cell surface of T lymphocytes. Recognize peptide-major histocompatibility (MH) (pMH) complexes that are displayed by antigen presenting cells (APC), a prerequisite for efficient T cell adaptive immunity against pathogens. Binding of alpha-beta TR to pMH complex initiates TR-CD3 clustering on the cell surface and intracellular activation of LCK that phosphorylates the ITAM motifs of CD3G, CD3D, CD3E and CD247 enabling the recruitment of ZAP70. In turn ZAP70 phosphorylates LAT, which recruits numerous signaling molecules to form the LAT signalosome. The LAT signalosome propagates signal branching to three major signaling pathways, the calcium, the mitogen-activated protein kinase (MAPK) kinase and the nuclear factor NF-kappa-B (NF-kB) pathways, leading to the mobilization of transcription factors that are critical for gene expression and essential for T cell growth and differentiation. The T cell repertoire is generated in the thymus, by V-(D)-J rearrangement. This repertoire is then shaped by intrathymic selection events to generate a peripheral T cell pool of self-MH restricted, non-autoaggressive T cells. Post-thymic interaction of alpha-beta TR with the pMH complexes shapes TR structural and functional avidity. The protein is T cell receptor alpha variable 41 of Homo sapiens (Human).